Consider the following 521-residue polypeptide: Tigger transposable element-derived protein 6 (521 aa).

An HTH psq-type domain is found at 3-54; it reads NKGNKKRRQFSLEEKMKVVGAVDSGKRKGDVAKEFGITPSTLSTFLKDRTKF. 2 consecutive DNA-binding regions (H-T-H motif) follow at residues 30-50 and 99-130; these read KGDV…FLKD and SVIR…FRDR. The 72-residue stretch at 66–137 folds into the HTH CENPB-type domain; sequence QRKRMRSALY…RDRHGIALKA (72 aa). The DDE-1 domain maps to 170–372; that stretch reads YSPDDIFNAD…VKPSTVVKCW (203 aa).

It belongs to the tigger transposable element derived protein family.

It is found in the nucleus. The chain is Tigger transposable element-derived protein 6 (TIGD6) from Homo sapiens (Human).